The primary structure comprises 294 residues: Polyketide transferase grgF (294 aa).

Residues Cys-115, Asp-240, and His-269 contribute to the active site.

The protein belongs to the polyketide transferase af380 family. In terms of assembly, homodimer.

It participates in secondary metabolite biosynthesis. Polyketide transferase; part of the gene cluster that mediates the biosynthesis of gregatin A, a fungal polyketide featuring an alkylated furanone core. The PKS grgA synthesizes C11 and C4 polyketide chains in the presence and absence of the trans-enoyl reductase grgB, respectively. The polyketide transferase grgF is then responsible for the fusion of the two carbon chains to produce the furanone skeleton of gregatin A. GrgF first undergoes a conformational change to an open form, and the active site Cys-115 is acylated by the C11 chain. After the elimination of the phosphopantetheinyl chain, the second polyketide chain of four carbons long is delivered adjacent to the enzyme-bound C11 chain. The catalytic histidine, His-269, deprotonates a proton from C-2 of the long chain, and the resultant carbanion attacks the C-1 carbonyl of the crotonyl group to perform Claisen condensation, by which the phosphopantetheinyl chain is released. Eventually, hydrolysis of the thioester linkage probably by a His-269-activated water molecule completes the reaction to afford the grgF final product. Next, the cytochrome P450 monooxygenase grgG accepts the unstable grgF final product as substrate and performs the oxidative cyclization to furnish the gregatin scaffold and leads to the formation of desmethylgregatin A. Finally, the O-methyltransferase grgD methylates the carboxyl group of desmethylgregatin A to provide gregatin A. In Penicillium sp, this protein is Polyketide transferase grgF.